The chain runs to 234 residues: Ribosomal RNA small subunit methyltransferase G (234 aa).

S-adenosyl-L-methionine contacts are provided by residues Gly-74, Phe-79, 125-126 (AE), and Arg-144.

This sequence belongs to the methyltransferase superfamily. RNA methyltransferase RsmG family.

Its subcellular location is the cytoplasm. In terms of biological role, specifically methylates the N7 position of a guanine in 16S rRNA. This is Ribosomal RNA small subunit methyltransferase G from Roseiflexus sp. (strain RS-1).